The primary structure comprises 339 residues: MamK-like protein (339 aa).

Residues 18 to 19, D74, 162 to 164, and 216 to 220 each bind ATP; these read YS, AWT, and KEQFA.

This sequence belongs to the FtsA/MreB family. MamK subfamily. In terms of assembly, forms cytoplasmic filament polymers. Forms filaments with MamK.

The protein resides in the cytoplasm. The protein localises to the cytoskeleton. The enzyme catalyses ATP + H2O = ADP + phosphate + H(+). In terms of biological role, protein with ATPase activity which forms pole-to-pole filaments in vivo, probably with MamK. Efficient filament formation requires MamK. Probably promotes turnover of MamK filaments, by providing a monomer pool. In vivo, in the absence of its paralog MamK, forms thin filaments from pole to pole. In vitro forms straight filaments and bundles in the absence of ATP. Filament formation is triggered by KCl and MgCl(2); polymerizes more slowly and makes thinner filaments than MamK. Expression in E.coli yields a filament in the cell's longitudinal axis; the protein nucleates at one pole or the cell septum. This is MamK-like protein from Paramagnetospirillum magneticum (strain ATCC 700264 / AMB-1) (Magnetospirillum magneticum).